The sequence spans 361 residues: Peptidyl-prolyl cis-trans isomerase CYP40 (361 aa).

Residues 7–172 (FMDISIGGEL…QDVVIHDCGE (166 aa)) form the PPIase cyclophilin-type domain. TPR repeat units lie at residues 212–245 (VDFVKAHGNEHFKKQDYKMALRKYRKALRYLDIC) and 298–331 (VKALFRQGQAYMALNNVDAAAESLEKALQFEPND).

Belongs to the cyclophilin-type PPIase family. Expressed at low levels in seedlings, roots, shoots, leaves, stems, inflorescences, flowers and siliques, with highest levels dividing tissues.

The protein resides in the cytoplasm. The enzyme catalyses [protein]-peptidylproline (omega=180) = [protein]-peptidylproline (omega=0). Its activity is regulated as follows. Binds cyclosporin A (CsA). CsA mediates some of its effects via an inhibitory action on PPIase. In terms of biological role, PPIases accelerate the folding of proteins. It catalyzes the cis-trans isomerization of proline imidic peptide bonds in oligopeptides. Involved in promoting the expression of the juvenile phase of vegetative development, and, to a lower extent, in regulating the positioning of floral buds, floral morphogenesis and the expression of HSPs. Collaboratively with RBL and ULT1, influences floral meristem (FM) determinacy in an AGAMOUS and SUPERMAN-dependent manner, thus contributing to the floral developmental homeostasis. This Arabidopsis thaliana (Mouse-ear cress) protein is Peptidyl-prolyl cis-trans isomerase CYP40.